The primary structure comprises 214 residues: RNA pyrophosphohydrolase (214 aa).

Residues 6 to 149 (GFRPNVGIIL…KRDVYQLALT (144 aa)) enclose the Nudix hydrolase domain. A Nudix box motif is present at residues 38–59 (GGIKYGETPMQAMYRELHEETG).

It belongs to the Nudix hydrolase family. RppH subfamily. The cofactor is a divalent metal cation.

Functionally, accelerates the degradation of transcripts by removing pyrophosphate from the 5'-end of triphosphorylated RNA, leading to a more labile monophosphorylated state that can stimulate subsequent ribonuclease cleavage. In Burkholderia cenocepacia (strain ATCC BAA-245 / DSM 16553 / LMG 16656 / NCTC 13227 / J2315 / CF5610) (Burkholderia cepacia (strain J2315)), this protein is RNA pyrophosphohydrolase.